We begin with the raw amino-acid sequence, 277 residues long: Antigen 1 (277 aa).

The first 16 residues, 1 to 16 (MQLLALTLALCASIAA), serve as a signal peptide directing secretion. 4 N-linked (GlcNAc...) asparagine glycosylation sites follow: N41, N71, N127, and N200. Residues 230–277 (CVGGEEENDGQGEEQTEEPAQDDQQDEAAEEEIPENCHTHEGGELHCT) form a disordered region. The segment covering 233-263 (GEEENDGQGEEQTEEPAQDDQQDEAAEEEIP) has biased composition (acidic residues). Positions 264–277 (ENCHTHEGGELHCT) are enriched in basic and acidic residues.

This sequence belongs to the ZPS1 family.

The chain is Antigen 1 (aspnd1) from Emericella nidulans (strain FGSC A4 / ATCC 38163 / CBS 112.46 / NRRL 194 / M139) (Aspergillus nidulans).